A 103-amino-acid polypeptide reads, in one-letter code: Large ribosomal subunit protein bL21 (103 aa).

The protein belongs to the bacterial ribosomal protein bL21 family. In terms of assembly, part of the 50S ribosomal subunit. Contacts protein L20.

This protein binds to 23S rRNA in the presence of protein L20. In Clostridioides difficile (strain 630) (Peptoclostridium difficile), this protein is Large ribosomal subunit protein bL21.